The sequence spans 261 residues: Carboxy-terminal domain RNA polymerase II polypeptide A small phosphatase 1 (261 aa).

M1 carries the N-acetylmethionine modification. The segment covering 1 to 10 has biased composition (polar residues); sequence MDSSAVITQI. Positions 1-33 are disordered; the sequence is MDSSAVITQISKEEARGPLRGKGDQKSAASQKP. The span at 11–25 shows a compositional bias: basic and acidic residues; sequence SKEEARGPLRGKGDQ. The FCP1 homology domain maps to 86–244; sequence QDSDKICVVI…HDLLPFFEQL (159 aa). Catalysis depends on D96, which acts as the 4-aspartylphosphate intermediate. Mg(2+) contacts are provided by D96, D98, and N207. The Proton donor role is filled by D98.

In terms of assembly, monomer. Interacts with GTF2F1. Interacts with REST. Mg(2+) serves as cofactor. In terms of tissue distribution, expression is restricted to non-neuronal tissues. Highest expression in skeletal muscle, spleen, lung and placenta.

The protein localises to the nucleus. The enzyme catalyses O-phospho-L-seryl-[protein] + H2O = L-seryl-[protein] + phosphate. It carries out the reaction O-phospho-L-threonyl-[protein] + H2O = L-threonyl-[protein] + phosphate. Its activity is regulated as follows. Stimulated by GTF2F1. Inhibited by beryllofluoride anions. Its function is as follows. Preferentially catalyzes the dephosphorylation of 'Ser-5' within the tandem 7 residue repeats in the C-terminal domain (CTD) of the largest RNA polymerase II subunit POLR2A. Negatively regulates RNA polymerase II transcription, possibly by controlling the transition from initiation/capping to processive transcript elongation. Recruited by REST to neuronal genes that contain RE-1 elements, leading to neuronal gene silencing in non-neuronal cells. This Homo sapiens (Human) protein is Carboxy-terminal domain RNA polymerase II polypeptide A small phosphatase 1 (CTDSP1).